The chain runs to 220 residues: Deoxyribose-phosphate aldolase (220 aa).

D89 acts as the Proton donor/acceptor in catalysis. Residue K151 is the Schiff-base intermediate with acetaldehyde of the active site. K180 acts as the Proton donor/acceptor in catalysis.

The protein belongs to the DeoC/FbaB aldolase family. DeoC type 1 subfamily.

Its subcellular location is the cytoplasm. The enzyme catalyses 2-deoxy-D-ribose 5-phosphate = D-glyceraldehyde 3-phosphate + acetaldehyde. The protein operates within carbohydrate degradation; 2-deoxy-D-ribose 1-phosphate degradation; D-glyceraldehyde 3-phosphate and acetaldehyde from 2-deoxy-alpha-D-ribose 1-phosphate: step 2/2. Its function is as follows. Catalyzes a reversible aldol reaction between acetaldehyde and D-glyceraldehyde 3-phosphate to generate 2-deoxy-D-ribose 5-phosphate. This chain is Deoxyribose-phosphate aldolase, found in Streptococcus suis (strain 98HAH33).